The following is a 150-amino-acid chain: UPF0336 protein SGR_2883 (150 aa).

The MaoC-like domain maps to 10–116 (RTYPPTPAYE…STIEAVKSLA (107 aa)).

It belongs to the UPF0336 family.

The sequence is that of UPF0336 protein SGR_2883 from Streptomyces griseus subsp. griseus (strain JCM 4626 / CBS 651.72 / NBRC 13350 / KCC S-0626 / ISP 5235).